The sequence spans 444 residues: Deoxyguanosinetriphosphate triphosphohydrolase-like protein (444 aa).

In terms of domain architecture, HD spans 59 to 250 (RLTHSLEVSQ…MELADDIAYA (192 aa)).

It belongs to the dGTPase family. Type 2 subfamily.

This Shewanella halifaxensis (strain HAW-EB4) protein is Deoxyguanosinetriphosphate triphosphohydrolase-like protein.